The chain runs to 123 residues: UPF0102 protein CLK_1817 (123 aa).

This sequence belongs to the UPF0102 family.

In Clostridium botulinum (strain Loch Maree / Type A3), this protein is UPF0102 protein CLK_1817.